Here is a 473-residue protein sequence, read N- to C-terminus: Xylan O-acetyltransferase 14 (473 aa).

Residues 1-17 are compositionally biased toward polar residues; that stretch reads MTTTGSTPPRKNRSNVT. Residues 1–22 form a disordered region; that stretch reads MTTTGSTPPRKNRSNVTGGEGG. Over 1 to 54 the chain is Cytoplasmic; that stretch reads MTTTGSTPPRKNRSNVTGGEGGSLEEYAWRAAGEAAAAKKATRAWGVSVSLRSH. A helical; Signal-anchor for type II membrane protein transmembrane segment spans residues 55–75; that stretch reads FSSLVLLLLLLLVALAVSATT. Residues 76–101 form a disordered region; it reads KNGDPAETPHAPPLPPPASIKLPSSS. At 76-473 the chain is on the lumenal side; it reads KNGDPAETPH…NQLLYAHIVS (398 aa). 4 cysteine pairs are disulfide-bonded: cysteine 108/cysteine 159, cysteine 130/cysteine 195, cysteine 139/cysteine 455, and cysteine 370/cysteine 451. Residues 182–184 carry the GDS motif motif; the sequence is GDS. The active-site Nucleophile is the serine 184. N-linked (GlcNAc...) asparagine glycosylation is found at asparagine 209, asparagine 223, and asparagine 414. Aspartate 450 functions as the Proton donor in the catalytic mechanism. The DXXH motif signature appears at 450–453; sequence DCIH. The active-site Proton acceptor is the histidine 453.

The protein belongs to the PC-esterase family. TBL subfamily.

The protein resides in the golgi apparatus membrane. Xylan acetyltransferase required for 2-O- and 3-O-monoacetylation of xylosyl residues in xylan. Catalyzes the 2-O-acetylation of xylan, followed by nonenzymatic acetyl migration to the O-3 position, resulting in products that are monoacetylated at both O-2 and O-3 positions. This is Xylan O-acetyltransferase 14 from Oryza sativa subsp. japonica (Rice).